The following is a 103-amino-acid chain: Large ribosomal subunit protein bL21 (103 aa).

It belongs to the bacterial ribosomal protein bL21 family. As to quaternary structure, part of the 50S ribosomal subunit. Contacts protein L20.

Its function is as follows. This protein binds to 23S rRNA in the presence of protein L20. The polypeptide is Large ribosomal subunit protein bL21 (Cupriavidus pinatubonensis (strain JMP 134 / LMG 1197) (Cupriavidus necator (strain JMP 134))).